Here is a 506-residue protein sequence, read N- to C-terminus: Cobyric acid synthase (506 aa).

The 198-residue stretch at 251 to 448 (DITIAIVQLP…LHGLFDSDAF (198 aa)) folds into the GATase cobBQ-type domain. The active-site Nucleophile is cysteine 332. Residue histidine 440 is part of the active site.

This sequence belongs to the CobB/CobQ family. CobQ subfamily. As to quaternary structure, homodimer.

Its pathway is cofactor biosynthesis; adenosylcobalamin biosynthesis. In terms of biological role, catalyzes amidations at positions B, D, E, and G on adenosylcobyrinic A,C-diamide. NH(2) groups are provided by glutamine, and one molecule of ATP is hydrogenolyzed for each amidation. The protein is Cobyric acid synthase (cbiP) of Salmonella typhimurium (strain LT2 / SGSC1412 / ATCC 700720).